The sequence spans 709 residues: MATCADILRSEFPEIDGQVFDYVTGVLHSGSADFESVDDLVEAVGELLQEVSGDSKDDAGIRAVCQRMYNTLRLAEPQNQGNNQVLLDAPIQLSKIMENYDCDTKLPGLLKREQSSTVNAKKLEKAEARLKAKQEKRSEKETLKTSSPLVLEEASASQAGSRKESRLESSGKNKSYDVRIENFDVSFGDRVLLAGADVNLAWGRRYGLVGRNGLGKTTLLKMLATRSLRVPAHISLLHVEQEVAGDDTPALQSVLESDTIREDLLRQERGLSLKIAAGRAEGSEAALLAEVYTKLEEIEADKAPARASVILAGLGFTPKMQQQPTREFSGGWRMRLALARALFARPDLLLLDEPTNMLDVRAILWLENYLQTWPSTILVVSHDRNFLNAIATDIIHLHSQRLDGYRGDFETFIKSKQERLLNQQREYEAQQQYRQHIQVFIDRFRYNANRASQVQSKLKMLEKLPELKPVDKESEVVLKFPDGFEKFSPPILQLDEVDFYYDPKHIIFSRLSVSADLESRICVVGENGAGKSTMLKLLMGDLAPVRGIRHAHRNLKIGYFSQHHVEQLDLNVSAVELLARKFPGRPEEEYRHQLGRYGISGELAMRPVASLSGGQKSRVAFAQMTMPCPNFYILDEPTNHLDMETIEALGHALNNFRGGVVLVSHDERFIRLVCKELWVCEKGSVTRVEGGFDQYRALLQEQFRREGFL.

Ala-2 is modified (N-acetylalanine). The span at 129–143 shows a compositional bias: basic and acidic residues; it reads RLKAKQEKRSEKETL. The interval 129-171 is disordered; the sequence is RLKAKQEKRSEKETLKTSSPLVLEEASASQAGSRKESRLESSG. Ser-155, Ser-157, and Ser-161 each carry phosphoserine. A compositionally biased stretch (basic and acidic residues) spans 161–171; that stretch reads SRKESRLESSG. ABC transporter domains follow at residues 178 to 424 and 492 to 707; these read VRIE…LNQQ and LQLD…RREG. Residue 210-217 participates in ATP binding; it reads GRNGLGKT. Phosphoserine is present on Ser-283. 525–532 lines the ATP pocket; it reads GENGAGKS.

This sequence belongs to the ABC transporter superfamily. ABCF family. EF3 subfamily.

Functionally, displays an antiviral effect against flaviviruses such as west Nile virus (WNV) in the presence of OAS1B. This Rattus norvegicus (Rat) protein is ATP-binding cassette sub-family F member 3 (Abcf3).